The sequence spans 642 residues: tRNA uridine 5-carboxymethylaminomethyl modification enzyme MnmG (642 aa).

FAD is bound by residues 10 to 15 (GAGHAG), Val-122, and Ser-177. Residue 269–283 (SARYCPSLEDKVMRF) participates in NAD(+) binding. Gln-366 contacts FAD.

The protein belongs to the MnmG family. As to quaternary structure, homodimer. Heterotetramer of two MnmE and two MnmG subunits. The cofactor is FAD.

It is found in the cytoplasm. Its function is as follows. NAD-binding protein involved in the addition of a carboxymethylaminomethyl (cmnm) group at the wobble position (U34) of certain tRNAs, forming tRNA-cmnm(5)s(2)U34. In Syntrophobacter fumaroxidans (strain DSM 10017 / MPOB), this protein is tRNA uridine 5-carboxymethylaminomethyl modification enzyme MnmG.